Consider the following 521-residue polypeptide: Interleukin-9 receptor (521 aa).

The N-terminal stretch at 1–40 (MGLGRCIWEGWTLESEALRRDMGTWLLACICICTCVCLGV) is a signal peptide. The Extracellular segment spans residues 41 to 270 (SVTGEGQGPR…GPLIPPWGWP (230 aa)). 2 N-linked (GlcNAc...) asparagine glycosylation sites follow: Asn-117 and Asn-156. One can recognise a Fibronectin type-III domain in the interval 149–259 (PPSDLQSNIS…QPVCFQAPQR (111 aa)). Positions 245–249 (WSEWS) match the WSXWS motif motif. The helical transmembrane segment at 271-291 (GNTLVAVSIFLLLTGPTYLLF) threads the bilayer. Over 292–521 (KLSPRVKRIF…VLSKARSWTF (230 aa)) the chain is Cytoplasmic. The short motif at 301-309 (FYQNVPSPA) is the Box 1 motif element. The segment at 413-439 (WAPTSLTRPAPPDSEGSRSSSSSSSSN) is disordered. The segment covering 429–439 (SRSSSSSSSSN) has biased composition (low complexity).

It belongs to the type I cytokine receptor family. Type 4 subfamily. In terms of assembly, interacts with IL9.

The protein resides in the cell membrane. It localises to the secreted. Functionally, plays an important role in the immune response against parasites by acting as a receptor of IL9. The sequence is that of Interleukin-9 receptor (IL9R) from Homo sapiens (Human).